A 443-amino-acid chain; its full sequence is Ribulose bisphosphate carboxylase large chain (443 aa).

K3 bears the N6,N6,N6-trimethyllysine mark. Substrate-binding residues include N112 and T162. Catalysis depends on K164, which acts as the Proton acceptor. Substrate is bound at residue K166. Residues K190, D192, and E193 each contribute to the Mg(2+) site. N6-carboxylysine is present on K190. The active-site Proton acceptor is the H283. R284, H316, and S368 together coordinate substrate.

It belongs to the RuBisCO large chain family. Type I subfamily. As to quaternary structure, heterohexadecamer of 8 large chains and 8 small chains; disulfide-linked. The disulfide link is formed within the large subunit homodimers. It depends on Mg(2+) as a cofactor. In terms of processing, the disulfide bond which can form in the large chain dimeric partners within the hexadecamer appears to be associated with oxidative stress and protein turnover.

Its subcellular location is the plastid. The protein localises to the chloroplast. The enzyme catalyses 2 (2R)-3-phosphoglycerate + 2 H(+) = D-ribulose 1,5-bisphosphate + CO2 + H2O. It catalyses the reaction D-ribulose 1,5-bisphosphate + O2 = 2-phosphoglycolate + (2R)-3-phosphoglycerate + 2 H(+). RuBisCO catalyzes two reactions: the carboxylation of D-ribulose 1,5-bisphosphate, the primary event in carbon dioxide fixation, as well as the oxidative fragmentation of the pentose substrate in the photorespiration process. Both reactions occur simultaneously and in competition at the same active site. This is Ribulose bisphosphate carboxylase large chain from Iris germanica (Bearded iris).